We begin with the raw amino-acid sequence, 96 residues long: Essential MCU regulator, mitochondrial (96 aa).

The N-terminal 34 residues, 1–34, are a transit peptide targeting the mitochondrion; the sequence is MIVSRLTFPLQAAKLVARKAAGNPSNSIIQRRHM. Residues 52–72 traverse the membrane as a helical segment; that stretch reads PFGLFAIFCAVIPGLFIGATI.

It belongs to the SMDT1/EMRE family.

The protein localises to the mitochondrion inner membrane. Essential regulatory subunit of the mitochondrial calcium uniporter (mcu) channel, a protein that mediates calcium uptake into mitochondria. The protein is Essential MCU regulator, mitochondrial of Drosophila pseudoobscura pseudoobscura (Fruit fly).